A 266-amino-acid polypeptide reads, in one-letter code: MEGSVCVDGAAAPAPDEASLIEGVSNAVLLVLVLSVTLLAGLTTLLCRSEQQRIHPESQERVRVVREQLQAEQVSSESRHQFYSDMSCPVCLQQAVLPVETNCGHLFCGSCIIAYWRYGTWLGAISCPICRQMVTLLFPLFQDSEQSAVAADSPVEPTLILTDISDYNRRFSGQPRSLLDRLRDVPTLLRHAFREMFSVGGLFWMFRVRILLCVCGALAYLVSPLDFLPEGVLGLLGFLDDFFVILLLFIYISIMYREVVTQRLAG.

At 1 to 26 (MEGSVCVDGAAAPAPDEASLIEGVSN) the chain is on the lumenal side. A helical membrane pass occupies residues 27 to 47 (AVLLVLVLSVTLLAGLTTLLC). At 48 to 209 (RSEQQRIHPE…GGLFWMFRVR (162 aa)) the chain is on the cytoplasmic side. The RING-type zinc-finger motif lies at 88-131 (CPVCLQQAVLPVETNCGHLFCGSCIIAYWRYGTWLGAISCPICR). Residues 210 to 230 (ILLCVCGALAYLVSPLDFLPE) traverse the membrane as a helical segment. Residue glycine 231 is a topological domain, lumenal. The chain crosses the membrane as a helical span at residues 232–252 (VLGLLGFLDDFFVILLLFIYI). The Cytoplasmic portion of the chain corresponds to 253-266 (SIMYREVVTQRLAG).

In terms of tissue distribution, highly expressed in the developing brain, and less within intersomitic structures of the trunk.

The protein resides in the endoplasmic reticulum membrane. The catalysed reaction is S-ubiquitinyl-[E2 ubiquitin-conjugating enzyme]-L-cysteine + [acceptor protein]-L-lysine = [E2 ubiquitin-conjugating enzyme]-L-cysteine + N(6)-ubiquitinyl-[acceptor protein]-L-lysine.. It participates in protein modification; protein ubiquitination. Its function is as follows. E3 ubiquitin-protein ligase that plays an essential role in stimulus-induced inositol 1,4,5-trisphosphate receptor (ITPR) ubiquitination and degradation via the endoplasmic reticulum-associated degradation (ERAD) pathway. Also involved in ITPR turnover in resting cells. The polypeptide is E3 ubiquitin-protein ligase RNF170 (rnf170) (Danio rerio (Zebrafish)).